We begin with the raw amino-acid sequence, 202 residues long: dITP/XTP pyrophosphatase (202 aa).

7-12 (SNNPGK) is a binding site for substrate. Positions 39 and 68 each coordinate Mg(2+). Asp68 serves as the catalytic Proton acceptor. Substrate is bound by residues Ala69, 157–160 (FGFD), Lys180, and 185–186 (HR).

Belongs to the HAM1 NTPase family. As to quaternary structure, homodimer. Requires Mg(2+) as cofactor.

It catalyses the reaction XTP + H2O = XMP + diphosphate + H(+). It carries out the reaction dITP + H2O = dIMP + diphosphate + H(+). The catalysed reaction is ITP + H2O = IMP + diphosphate + H(+). Pyrophosphatase that catalyzes the hydrolysis of nucleoside triphosphates to their monophosphate derivatives, with a high preference for the non-canonical purine nucleotides XTP (xanthosine triphosphate), dITP (deoxyinosine triphosphate) and ITP. Seems to function as a house-cleaning enzyme that removes non-canonical purine nucleotides from the nucleotide pool, thus preventing their incorporation into DNA/RNA and avoiding chromosomal lesions. The protein is dITP/XTP pyrophosphatase of Polaromonas naphthalenivorans (strain CJ2).